The chain runs to 396 residues: 1-deoxy-D-xylulose 5-phosphate reductoisomerase (396 aa).

5 residues coordinate NADPH: T13, G14, S15, I16, and N127. 1-deoxy-D-xylulose 5-phosphate is bound at residue K128. E129 contributes to the NADPH binding site. D153 lines the Mn(2+) pocket. 1-deoxy-D-xylulose 5-phosphate contacts are provided by S154, E155, S184, and H207. E155 contacts Mn(2+). Residue G213 coordinates NADPH. 4 residues coordinate 1-deoxy-D-xylulose 5-phosphate: S220, N225, K226, and E229. E229 provides a ligand contact to Mn(2+).

It belongs to the DXR family. Mg(2+) is required as a cofactor. Mn(2+) serves as cofactor.

It catalyses the reaction 2-C-methyl-D-erythritol 4-phosphate + NADP(+) = 1-deoxy-D-xylulose 5-phosphate + NADPH + H(+). Its pathway is isoprenoid biosynthesis; isopentenyl diphosphate biosynthesis via DXP pathway; isopentenyl diphosphate from 1-deoxy-D-xylulose 5-phosphate: step 1/6. Functionally, catalyzes the NADPH-dependent rearrangement and reduction of 1-deoxy-D-xylulose-5-phosphate (DXP) to 2-C-methyl-D-erythritol 4-phosphate (MEP). The protein is 1-deoxy-D-xylulose 5-phosphate reductoisomerase of Pseudomonas fluorescens (strain Pf0-1).